A 218-amino-acid chain; its full sequence is Small ribosomal subunit protein mS34 (218 aa).

Residues 178–218 (RQKNGDPSTEEPMLSLERIRTDPWDYPENQEAKKKTKGTAV) form a disordered region.

This sequence belongs to the mitochondrion-specific ribosomal protein mS34 family. As to quaternary structure, component of the mitochondrial ribosome small subunit (28S) which comprises a 12S rRNA and about 30 distinct proteins.

The protein resides in the mitochondrion. In terms of biological role, required for mitochondrial translation, plays a role in maintaining the stability of the small ribosomal subunit and the 12S rRNA that are required for mitoribosome formation. This is Small ribosomal subunit protein mS34 from Bos taurus (Bovine).